Reading from the N-terminus, the 130-residue chain is Iron-sulfur cluster insertion protein ErpA (130 aa).

Positions 58, 122, and 124 each coordinate iron-sulfur cluster.

This sequence belongs to the HesB/IscA family. In terms of assembly, homodimer. Iron-sulfur cluster is required as a cofactor.

Required for insertion of 4Fe-4S clusters for at least IspG. This chain is Iron-sulfur cluster insertion protein ErpA, found in Stenotrophomonas maltophilia (strain R551-3).